The chain runs to 130 residues: Large ribosomal subunit protein bL19 (130 aa).

Belongs to the bacterial ribosomal protein bL19 family.

Functionally, this protein is located at the 30S-50S ribosomal subunit interface and may play a role in the structure and function of the aminoacyl-tRNA binding site. In Methylorubrum populi (strain ATCC BAA-705 / NCIMB 13946 / BJ001) (Methylobacterium populi), this protein is Large ribosomal subunit protein bL19.